The following is a 2443-amino-acid chain: Spatacsin (2443 aa).

S1955 is modified (phosphoserine).

In terms of assembly, interacts with AP5Z1, AP5B1, AP5S1 and ZFYVE26. Expressed in all structures of brain, with a high expression in cerebellum. Expressed in cortical projection neurons.

Its subcellular location is the cytoplasm. The protein resides in the cytosol. The protein localises to the nucleus. It localises to the cell projection. It is found in the axon. Its subcellular location is the dendrite. In terms of biological role, may play a role in neurite plasticity by maintaining cytoskeleton stability and regulating synaptic vesicle transport. In Homo sapiens (Human), this protein is Spatacsin (SPG11).